The primary structure comprises 545 residues: Chaperonin GroEL (545 aa).

ATP contacts are provided by residues Thr30–Pro33, Lys51, Asp87–Thr91, Gly415, and Asp495.

It belongs to the chaperonin (HSP60) family. In terms of assembly, forms a cylinder of 14 subunits composed of two heptameric rings stacked back-to-back. Interacts with the co-chaperonin GroES.

It is found in the cytoplasm. The enzyme catalyses ATP + H2O + a folded polypeptide = ADP + phosphate + an unfolded polypeptide.. Its function is as follows. Together with its co-chaperonin GroES, plays an essential role in assisting protein folding. The GroEL-GroES system forms a nano-cage that allows encapsulation of the non-native substrate proteins and provides a physical environment optimized to promote and accelerate protein folding. The protein is Chaperonin GroEL of Shewanella denitrificans (strain OS217 / ATCC BAA-1090 / DSM 15013).